The sequence spans 349 residues: Phosphoribosylformylglycinamidine cyclo-ligase (349 aa).

Belongs to the AIR synthase family.

The protein resides in the cytoplasm. It carries out the reaction 2-formamido-N(1)-(5-O-phospho-beta-D-ribosyl)acetamidine + ATP = 5-amino-1-(5-phospho-beta-D-ribosyl)imidazole + ADP + phosphate + H(+). Its pathway is purine metabolism; IMP biosynthesis via de novo pathway; 5-amino-1-(5-phospho-D-ribosyl)imidazole from N(2)-formyl-N(1)-(5-phospho-D-ribosyl)glycinamide: step 2/2. The sequence is that of Phosphoribosylformylglycinamidine cyclo-ligase from Methanococcus maripaludis (strain DSM 14266 / JCM 13030 / NBRC 101832 / S2 / LL).